Consider the following 484-residue polypeptide: Transcription factor cghD (484 aa).

A DNA-binding region (zn(2)-C6 fungal-type) is located at residues 21–54; it reads CDRCRLQKLKCTVQSMESDGRMVCERCVRAKVPC. 4 disordered regions span residues 59–117, 136–174, 202–242, and 386–406; these read RRRA…PTLA, TTAP…SGSS, PAST…FSTT, and HMHS…ELPS. Over residues 64–76 the composition is skewed to basic and acidic residues; sequence RPSDTKKQGDSST. Positions 77-107 are enriched in low complexity; that stretch reads RRSTAPRTTNPEPTVLTPPLSTTSSTSEQTL. Residues 202–213 show a composition bias toward low complexity; the sequence is PASTSTSTGSPT.

The protein resides in the nucleus. Transcription factor that regulates the expression of the gene cluster that mediates the biosynthesis of the tetramic acid Sch210972, a potential anti-HIV fungal natural product that contains a decalin core. The chain is Transcription factor cghD from Chaetomium globosum (strain ATCC 6205 / CBS 148.51 / DSM 1962 / NBRC 6347 / NRRL 1970) (Soil fungus).